The following is a 230-amino-acid chain: Cytidylate kinase (230 aa).

Position 17–25 (17–25 (GPTASGKGT)) interacts with ATP.

Belongs to the cytidylate kinase family. Type 1 subfamily.

Its subcellular location is the cytoplasm. It catalyses the reaction CMP + ATP = CDP + ADP. It carries out the reaction dCMP + ATP = dCDP + ADP. This chain is Cytidylate kinase, found in Ralstonia nicotianae (strain ATCC BAA-1114 / GMI1000) (Ralstonia solanacearum).